The following is a 199-amino-acid chain: FMN-dependent NADH:quinone oxidoreductase 2 (199 aa).

FMN-binding positions include Ser-10, 16–18, and 96–99; these read SVS and MYNF.

Belongs to the azoreductase type 1 family. As to quaternary structure, homodimer. FMN serves as cofactor.

It carries out the reaction 2 a quinone + NADH + H(+) = 2 a 1,4-benzosemiquinone + NAD(+). It catalyses the reaction N,N-dimethyl-1,4-phenylenediamine + anthranilate + 2 NAD(+) = 2-(4-dimethylaminophenyl)diazenylbenzoate + 2 NADH + 2 H(+). In terms of biological role, quinone reductase that provides resistance to thiol-specific stress caused by electrophilic quinones. Functionally, also exhibits azoreductase activity. Catalyzes the reductive cleavage of the azo bond in aromatic azo compounds to the corresponding amines. The sequence is that of FMN-dependent NADH:quinone oxidoreductase 2 from Pseudomonas putida (strain ATCC 47054 / DSM 6125 / CFBP 8728 / NCIMB 11950 / KT2440).